Consider the following 525-residue polypeptide: ATP synthase subunit alpha (525 aa).

172–179 (GDRQTGKT) provides a ligand contact to ATP.

This sequence belongs to the ATPase alpha/beta chains family. F-type ATPases have 2 components, CF(1) - the catalytic core - and CF(0) - the membrane proton channel. CF(1) has five subunits: alpha(3), beta(3), gamma(1), delta(1), epsilon(1). CF(0) has three main subunits: a(1), b(2) and c(9-12). The alpha and beta chains form an alternating ring which encloses part of the gamma chain. CF(1) is attached to CF(0) by a central stalk formed by the gamma and epsilon chains, while a peripheral stalk is formed by the delta and b chains.

Its subcellular location is the cell inner membrane. It carries out the reaction ATP + H2O + 4 H(+)(in) = ADP + phosphate + 5 H(+)(out). Functionally, produces ATP from ADP in the presence of a proton gradient across the membrane. The alpha chain is a regulatory subunit. This is ATP synthase subunit alpha from Parabacteroides distasonis (strain ATCC 8503 / DSM 20701 / CIP 104284 / JCM 5825 / NCTC 11152).